We begin with the raw amino-acid sequence, 217 residues long: 3,4-dihydroxy-2-butanone 4-phosphate synthase (217 aa).

D-ribulose 5-phosphate-binding positions include 37 to 38, D42, 150 to 154, and E174; these read RE and RGGHT. Mg(2+) is bound at residue E38. Mg(2+) is bound at residue H153.

This sequence belongs to the DHBP synthase family. In terms of assembly, homodimer. Mg(2+) serves as cofactor. The cofactor is Mn(2+).

The catalysed reaction is D-ribulose 5-phosphate = (2S)-2-hydroxy-3-oxobutyl phosphate + formate + H(+). Its pathway is cofactor biosynthesis; riboflavin biosynthesis; 2-hydroxy-3-oxobutyl phosphate from D-ribulose 5-phosphate: step 1/1. Functionally, catalyzes the conversion of D-ribulose 5-phosphate to formate and 3,4-dihydroxy-2-butanone 4-phosphate. In Cronobacter sakazakii (strain ATCC BAA-894) (Enterobacter sakazakii), this protein is 3,4-dihydroxy-2-butanone 4-phosphate synthase.